A 440-amino-acid chain; its full sequence is Tryptophan synthase beta chain (440 aa).

Lys110 carries the post-translational modification N6-(pyridoxal phosphate)lysine.

Belongs to the TrpB family. In terms of assembly, tetramer of two alpha and two beta chains. It depends on pyridoxal 5'-phosphate as a cofactor.

It catalyses the reaction (1S,2R)-1-C-(indol-3-yl)glycerol 3-phosphate + L-serine = D-glyceraldehyde 3-phosphate + L-tryptophan + H2O. It functions in the pathway amino-acid biosynthesis; L-tryptophan biosynthesis; L-tryptophan from chorismate: step 5/5. Its function is as follows. The beta subunit is responsible for the synthesis of L-tryptophan from indole and L-serine. This chain is Tryptophan synthase beta chain, found in Thermococcus gammatolerans (strain DSM 15229 / JCM 11827 / EJ3).